Consider the following 453-residue polypeptide: HTH-type pyridoxine biosynthesis transcriptional regulator PdxR (453 aa).

One can recognise an HTH gntR-type domain in the interval 15 to 83; the sequence is TSIPTQLTEQ…RGSGTTINPD (69 aa). Positions 43–62 form a DNA-binding region, H-T-H motif; it reads SRSLSTQLGVSRGSVVTAYD.

It in the C-terminal section; belongs to the class-I pyridoxal-phosphate-dependent aminotransferase family. The cofactor is pyridoxal 5'-phosphate.

Functionally, may have a regulatory function in pyridoxine biosynthesis. Is said to also have an aminotransferase activity in valine biosynthesis as a double inactivation of ilvE and pdxR results in an auxotrophic requirement for valine. This is HTH-type pyridoxine biosynthesis transcriptional regulator PdxR (pdxR) from Corynebacterium glutamicum (strain ATCC 13032 / DSM 20300 / JCM 1318 / BCRC 11384 / CCUG 27702 / LMG 3730 / NBRC 12168 / NCIMB 10025 / NRRL B-2784 / 534).